Consider the following 382-residue polypeptide: Protein-arginine rhamnosyltransferase (382 aa).

Position 18-19 (18-19 (FG)) interacts with dTDP. Aspartate 20 serves as the catalytic Proton acceptor. DTDP-beta-L-rhamnose-binding positions include aspartate 20, tyrosine 187, 250-252 (VPQ), and 268-272 (RGEDS). DTDP-binding positions include tyrosine 187, 250 to 252 (VPQ), and 268 to 272 (RGEDS). The active site involves glutamate 270.

The protein belongs to the glycosyltransferase 104 family.

The enzyme catalyses dTDP-beta-L-rhamnose + L-arginyl-[protein] = N(omega)-(alpha-L-rhamnosyl)-L-arginyl-[protein] + dTDP + H(+). Its function is as follows. Protein-arginine rhamnosyltransferase that catalyzes the transfer of a single rhamnose to elongation factor P (EF-P) on 'Lys-32', a modification required for EF-P-dependent rescue of polyproline stalled ribosomes. This chain is Protein-arginine rhamnosyltransferase, found in Neisseria meningitidis serogroup B / serotype 15 (strain H44/76).